The chain runs to 435 residues: Dual specificity protein kinase FUZ7 (435 aa).

Positions 1–61 are disordered; the sequence is MLSSGAGSSI…TIGKSSAVTP (61 aa). Polar residues predominate over residues 46 to 59; the sequence is AASNASTIGKSSAV. A Protein kinase domain is found at 109–417; the sequence is LKTLSELGAG…PKDLTKHQYV (309 aa). Residues 115 to 123 and K138 each bind ATP; that span reads LGAGNGGTV. The Proton acceptor role is filled by D231. Positions 307–359 are disordered; it reads NEEDDDSDADNNYTNEDLAGTLSPTKPAPMISLGQNEKQRRRKSKPAGVSLEG.

The protein belongs to the protein kinase superfamily. STE Ser/Thr protein kinase family. MAP kinase kinase subfamily.

The enzyme catalyses L-seryl-[protein] + ATP = O-phospho-L-seryl-[protein] + ADP + H(+). It catalyses the reaction L-threonyl-[protein] + ATP = O-phospho-L-threonyl-[protein] + ADP + H(+). The catalysed reaction is L-tyrosyl-[protein] + ATP = O-phospho-L-tyrosyl-[protein] + ADP + H(+). Protein kinase that is necessary for a-locus-dependent processes, such as conjugation tube formation, filament formation, and maintenance of filamentous growth, and for a-locus-independent processes, such as tumor induction and teliospore germination. This Mycosarcoma maydis (Corn smut fungus) protein is Dual specificity protein kinase FUZ7 (FUZ7).